We begin with the raw amino-acid sequence, 26 residues long: Dermaseptin-J2 (26 aa).

Valine 26 bears the Valine amide mark.

Expressed by the skin glands.

The protein resides in the secreted. In terms of biological role, has antimicrobial activity. The chain is Dermaseptin-J2 from Phasmahyla jandaia (Jandaia leaf frog).